The sequence spans 182 residues: MNLKEAEEKMQKAIEATKNSFNTVRTGRANASLLDRVMVEYYGSPTQLKSMANIGIPDASTITIQPYDKTSLGLIEKAINMSDVGLTPNNDGSIIRLNIPALTAERRQEMVKKTAKLAEEGKVSIRNIRRDAVDSIRKQEKNSDISKDESRDLQDKVQKKTDKYIAKIDELLAAKEKDMTTV.

Residues 136-156 form a disordered region; the sequence is IRKQEKNSDISKDESRDLQDK.

This sequence belongs to the RRF family.

It is found in the cytoplasm. Functionally, responsible for the release of ribosomes from messenger RNA at the termination of protein biosynthesis. May increase the efficiency of translation by recycling ribosomes from one round of translation to another. This chain is Ribosome-recycling factor, found in Trichodesmium erythraeum (strain IMS101).